The chain runs to 1004 residues: Putative helicase MOV-10 (1004 aa).

An N6-acetyllysine modification is found at lysine 148. Residue threonine 254 is modified to Phosphothreonine. Serine 433 is modified (phosphoserine). Glycine 525–threonine 532 serves as a coordination point for ATP. The DEAG box signature appears at aspartate 646–glycine 649. The interaction with AGO2 and APOBEC3G stretch occupies residues asparagine 922 to leucine 966. The segment at leucine 966 to leucine 1004 is disordered. The residue at position 970 (serine 970) is a Phosphoserine.

This sequence belongs to the DNA2/NAM7 helicase family. SDE3 subfamily. In terms of assembly, interacts with DICER1, AGO2, TARBP2, EIF6 and RPL7A (60S ribosome subunit); they form a large RNA-induced silencing complex (RISC). Interacts with APOBEC3G in an RNA-dependent manner. Interacts with TRIM71 (via NHL repeats) in an RNA-dependent manner. Interacts with both protein products of LIRE1, ORF1p and ORF2p. Interacts with TUT4 and, to a lesser extent, TUT7; the interactions are RNA-dependent. Interacts with AGO2, TNRC6B and UPF1; the interactions are direct and RNA-dependent. Interacts with FMR1; this interaction is direct, occurs in an RNA-dependent manner on polysomes and induces association of MOV10 with RNAs. Interacts with SHFL; the interaction increases in presence of RNA. Interacts with DHX34; the interaction is RNA-independent. Interacts with RBM46. In terms of processing, ubiquitinated by the DCX(DCAF12) complex that specifically recognizes the glutamate-leucine (Glu-Leu) degron at the C-terminus, leading to its degradation.

Its subcellular location is the cytoplasm. It is found in the P-body. It localises to the nucleus. The protein localises to the cytoplasmic ribonucleoprotein granule. The protein resides in the stress granule. The catalysed reaction is ATP + H2O = ADP + phosphate + H(+). In terms of biological role, 5' to 3' RNA helicase that is involved in a number of cellular roles ranging from mRNA metabolism and translation, modulation of viral infectivity, inhibition of retrotransposition, or regulation of synaptic transmission. Plays an important role in innate antiviral immunity by promoting type I interferon production. Mechanistically, specifically uses IKKepsilon/IKBKE as the mediator kinase for IRF3 activation. Contributes to UPF1 mRNA target degradation by translocation along 3' UTRs. Required for microRNA (miRNA)-mediated gene silencing by the RNA-induced silencing complex (RISC). Required for both miRNA-mediated translational repression and miRNA-mediated cleavage of complementary mRNAs by RISC. In cooperation with FMR1, regulates miRNA-mediated translational repression by AGO2. Restricts retrotransposition of long interspersed element-1 (LINE-1) in cooperation with TUT4 and TUT7 counteracting the RNA chaperonne activity of L1RE1. Facilitates LINE-1 uridylation by TUT4 and TUT7. Required for embryonic viability and for normal central nervous system development and function. Plays two critical roles in early brain development: suppresses retroelements in the nucleus by directly inhibiting cDNA synthesis, while regulates cytoskeletal mRNAs to influence neurite outgrowth in the cytosol. May function as a messenger ribonucleoprotein (mRNP) clearance factor. The polypeptide is Putative helicase MOV-10 (Mov10) (Mus musculus (Mouse)).